We begin with the raw amino-acid sequence, 145 residues long: D-aminoacyl-tRNA deacylase (145 aa).

The Gly-cisPro motif, important for rejection of L-amino acids motif lies at 137–138 (GP).

The protein belongs to the DTD family. As to quaternary structure, homodimer.

It localises to the cytoplasm. It catalyses the reaction glycyl-tRNA(Ala) + H2O = tRNA(Ala) + glycine + H(+). The catalysed reaction is a D-aminoacyl-tRNA + H2O = a tRNA + a D-alpha-amino acid + H(+). Its function is as follows. An aminoacyl-tRNA editing enzyme that deacylates mischarged D-aminoacyl-tRNAs. Also deacylates mischarged glycyl-tRNA(Ala), protecting cells against glycine mischarging by AlaRS. Acts via tRNA-based rather than protein-based catalysis; rejects L-amino acids rather than detecting D-amino acids in the active site. By recycling D-aminoacyl-tRNA to D-amino acids and free tRNA molecules, this enzyme counteracts the toxicity associated with the formation of D-aminoacyl-tRNA entities in vivo and helps enforce protein L-homochirality. The sequence is that of D-aminoacyl-tRNA deacylase from Lactobacillus gasseri (strain ATCC 33323 / DSM 20243 / BCRC 14619 / CIP 102991 / JCM 1131 / KCTC 3163 / NCIMB 11718 / NCTC 13722 / AM63).